Consider the following 105-residue polypeptide: Small ribosomal subunit protein uS10 (105 aa).

Belongs to the universal ribosomal protein uS10 family. Part of the 30S ribosomal subunit.

Its function is as follows. Involved in the binding of tRNA to the ribosomes. This is Small ribosomal subunit protein uS10 from Rickettsia akari (strain Hartford).